The primary structure comprises 83 residues: Mu-theraphotoxin-Hhn2n (83 aa).

The N-terminal stretch at 1–21 is a signal peptide; it reads MKASMYLALAGLVLLFVVGYA. Positions 22 to 48 are excised as a propeptide; that stretch reads SESEEKEFPRELLSKIFAVDDFKGEER. 3 cysteine pairs are disulfide-bonded: C50-C65, C57-C70, and C64-C77. A Leucine amide modification is found at L81.

The protein belongs to the neurotoxin 10 (Hwtx-1) family. 15 (Hntx-3) subfamily. As to quaternary structure, monomer. As to expression, expressed by the venom gland.

Its subcellular location is the secreted. Functionally, lethal neurotoxin. Selectively blocks tetrodotoxin-sensitive voltage-gated sodium channels (Nav). Does not affect tetrodotoxin-resistant voltage-gated sodium channels or calcium channels. In Cyriopagopus hainanus (Chinese bird spider), this protein is Mu-theraphotoxin-Hhn2n.